Here is a 95-residue protein sequence, read N- to C-terminus: Protein Vpr (95 aa).

The segment at 1 to 42 (MERAPEDAGPQREPYNEWALELLEELKNEAVRHFPRIWLHGL) is homooligomerization. Ser79, Ser93, and Ser95 each carry phosphoserine; by host.

It belongs to the HIV-1 VPR protein family. Homooligomer, may form homodimer. Interacts with p6-gag region of the Pr55 Gag precursor protein through a (Leu-X-X)4 motif near the C-terminus of the P6gag protein. Interacts with host UNG. May interact with host RAD23A/HHR23A. Interacts with host VPRBP/DCAF1, leading to hijack the CUL4A-RBX1-DDB1-DCAF1/VPRBP complex, mediating ubiquitination of host proteins such as TERT and ZGPAT and arrest of the cell cycle in G2 phase. Phosphorylated on several residues by host. These phosphorylations regulate VPR activity for the nuclear import of the HIV-1 pre-integration complex.

Its subcellular location is the virion. The protein resides in the host nucleus. It is found in the host extracellular space. Functionally, during virus replication, may deplete host UNG protein, and incude G2-M cell cycle arrest. Acts by targeting specific host proteins for degradation by the 26S proteasome, through association with the cellular CUL4A-DDB1 E3 ligase complex by direct interaction with host VPRPB/DCAF-1. Cell cycle arrest reportedly occurs within hours of infection and is not blocked by antiviral agents, suggesting that it is initiated by the VPR carried into the virion. Additionally, VPR induces apoptosis in a cell cycle dependent manner suggesting that these two effects are mechanistically linked. Detected in the serum and cerebrospinal fluid of AIDS patient, VPR may also induce cell death to bystander cells. During virus entry, plays a role in the transport of the viral pre-integration (PIC) complex to the host nucleus. This function is crucial for viral infection of non-dividing macrophages. May act directly at the nuclear pore complex, by binding nucleoporins phenylalanine-glycine (FG)-repeat regions. This Human immunodeficiency virus type 1 group N (isolate YBF30) (HIV-1) protein is Protein Vpr.